Consider the following 2437-residue polypeptide: Neurogenic locus notch homolog protein 1 (2437 aa).

Positions 1-20 are cleaved as a signal peptide; sequence MNRFLVKLTLLTAASLATVA. EGF-like domains follow at residues 21–57, 58–98, 101–138, and 139–175; these read QGQRCSEYCQNGGICEYKPSGEASCRCPADFVGAQCQ, FPNP…RLCL, VNHACMNSPCRNGGTCSLLTLDTFTCRCQPGWSGKTCQ, and LADPCASNPCANGGQCSAFESHYICTCPPNFHGQTCR. Residues 21-1726 are Extracellular-facing; it reads QGQRCSEYCQ…GGPPKTGEMY (1706 aa). Cystine bridges form between Cys25/Cys35, Cys29/Cys45, Cys47/Cys56, Cys62/Cys73, Cys67/Cys86, Cys88/Cys97, Cys105/Cys116, Cys110/Cys126, Cys128/Cys137, Cys143/Cys154, Cys148/Cys163, Cys165/Cys174, Cys181/Cys194, Cys188/Cys203, Cys205/Cys214, Cys221/Cys232, Cys226/Cys242, Cys244/Cys253, Cys260/Cys271, Cys265/Cys280, Cys282/Cys291, Cys298/Cys311, Cys305/Cys320, Cys322/Cys331, Cys338/Cys349, Cys343/Cys358, Cys360/Cys369, Cys375/Cys386, Cys380/Cys397, Cys399/Cys408, Cys415/Cys428, Cys422/Cys437, Cys439/Cys448, Cys455/Cys466, Cys460/Cys475, Cys477/Cys486, Cys493/Cys503, Cys498/Cys512, Cys514/Cys523, Cys530/Cys541, Cys535/Cys550, Cys552/Cys561, Cys568/Cys578, Cys573/Cys587, Cys589/Cys598, Cys605/Cys616, Cys610/Cys625, Cys627/Cys636, Cys643/Cys653, Cys648/Cys662, Cys664/Cys673, Cys680/Cys691, Cys685/Cys700, Cys702/Cys711, Cys718/Cys728, Cys723/Cys737, Cys739/Cys748, Cys755/Cys766, Cys760/Cys775, Cys777/Cys786, Cys793/Cys804, Cys798/Cys813, Cys815/Cys824, Cys831/Cys842, Cys836/Cys853, Cys855/Cys864, Cys871/Cys882, Cys876/Cys891, Cys893/Cys902, Cys909/Cys920, Cys914/Cys929, Cys931/Cys940, Cys947/Cys958, Cys952/Cys967, Cys969/Cys978, Cys985/Cys996, Cys990/Cys1005, Cys1007/Cys1016, Cys1023/Cys1034, Cys1028/Cys1043, Cys1045/Cys1054, Cys1061/Cys1072, Cys1066/Cys1081, Cys1083/Cys1092, Cys1099/Cys1120, Cys1114/Cys1129, Cys1131/Cys1140, Cys1147/Cys1158, Cys1152/Cys1167, Cys1169/Cys1178, Cys1185/Cys1196, Cys1190/Cys1205, Cys1207/Cys1216, Cys1223/Cys1242, Cys1236/Cys1251, Cys1253/Cys1262, Cys1269/Cys1282, Cys1274/Cys1291, Cys1293/Cys1302, Cys1309/Cys1320, Cys1314/Cys1332, Cys1334/Cys1343, Cys1350/Cys1361, Cys1355/Cys1370, Cys1372/Cys1381, Cys1389/Cys1400, Cys1394/Cys1411, Cys1413/Cys1422, Cys1447/Cys1470, Cys1452/Cys1465, and Cys1461/Cys1477. The EGF-like 5; calcium-binding domain occupies 177-215; that stretch reads DVNECAVSPSPCRNGGTCINEVGSYLCRCPPEYTGPHCQ. An EGF-like 6 domain is found at 217–254; it reads LYQPCLPSPCRSGGTCVQTSDTTHTCSCLPGFTGQTCE. O-linked (Fuc...) threonine; alternate glycosylation occurs at Thr231. Thr231 is a glycosylation site (O-linked (GalNAc...) threonine; alternate). In terms of domain architecture, EGF-like 7; calcium-binding spans 256–292; the sequence is NVDDCTQHACENGGPCIDGINTYNCHCDKHWTGQYCT. The 39-residue stretch at 294 to 332 folds into the EGF-like 8; calcium-binding domain; the sequence is DVDECELSPNACQNGGTCHNTIGGFHCVCVNGWTGDDCS. The region spanning 334-370 is the EGF-like 9; calcium-binding domain; sequence NIDDCASAACSHGATCHDRVASFFCECPHGRTGLLCH. The EGF-like 10 domain occupies 371–409; it reads LDDACISNPCQKGSNCDTNPVSGKAICTCPPGYTGSACN. An EGF-like 11; calcium-binding domain is found at 411–449; that stretch reads DIDECSLGANPCEHGGRCLNTKGSFQCKCLQGYEGPRCE. The EGF-like 12; calcium-binding domain occupies 451–487; the sequence is DVNECKSNPCQNDATCLDQIGGFHCICMPGYEGVFCQ. In terms of domain architecture, EGF-like 13; calcium-binding spans 489–524; that stretch reads NSDDCASQPCLNGKCIDKINSFHCECPKGFSGSLCQ. The EGF-like 14; calcium-binding domain occupies 526–562; the sequence is DVDECASTPCKNGAKCTDGPNKYTCECTPGFSGIHCE. The 36-residue stretch at 564–599 folds into the EGF-like 15; calcium-binding domain; it reads DINECASSPCHYGVCRDGVASFTCDCRPGYTGRLCE. The region spanning 601-637 is the EGF-like 16; calcium-binding domain; it reads NINECLSQPCRNGGTCQDRENAYICTCPKGTTGVNCE. Residues 639–674 enclose the EGF-like 17; calcium-binding domain; sequence NIDDCKRKPCDYGKCIDKINGYECVCEPGYSGSMCN. An EGF-like 18; calcium-binding domain is found at 676–712; that stretch reads NIDDCALNPCHNGGTCIDGVNSFTCLCPDGFRDATCL. One can recognise an EGF-like 19; calcium-binding domain in the interval 714 to 749; it reads QHNECSSNPCIHGSCLDQINSYRCVCEAGWMGRNCD. The 37-residue stretch at 751 to 787 folds into the EGF-like 20; calcium-binding domain; that stretch reads NINECLSNPCVNGGTCKDMTSGYLCTCRAGFSGPNCQ. In terms of domain architecture, EGF-like 21; calcium-binding spans 789 to 825; it reads NINECASNPCLNQGSCIDDVAGFKCNCMLPYTGEVCE. The EGF-like 22 domain maps to 827-865; that stretch reads VLAPCSPRPCKNGGVCRESEDFQSFSCNCPAGWQGQTCE. The EGF-like 23; calcium-binding domain occupies 867 to 903; that stretch reads DINECVRNPCTNGGVCENLRGGFQCRCNPGFTGALCE. The EGF-like 24; calcium-binding domain maps to 905 to 941; sequence DIDDCEPNPCSNGGVCQDRVNGFVCVCLAGFRGERCA. Residues 943–979 form the EGF-like 25; calcium-binding domain; the sequence is DIDECVSAPCRNGGNCTDCVNSYTCSCPAGFSGINCE. Asn957 carries N-linked (GlcNAc...) asparagine glycosylation. Residues 981–1017 enclose the EGF-like 26 domain; it reads NTPDCTESSCFNGGTCVDGISSFSCVCLPGFTGNYCQ. An EGF-like 27; calcium-binding domain is found at 1019–1055; the sequence is DVNECDSRPCQNGGSCQDGYGTYKCTCPHGYTGLNCQ. 2 consecutive EGF-like domains span residues 1057-1093 and 1095-1141; these read LVRWCDSSPCKNGGSCWQQGASFTCQCASGWTGIYCD and PSVS…SYCQ. Positions 1143-1179 constitute an EGF-like 30; calcium-binding domain; sequence QVDECQPNPCQNGATCTDYLGGYSCECVPGYHGMNCS. A glycan (N-linked (GlcNAc...) asparagine) is linked at Asn1177. Residues 1181-1217 form the EGF-like 31; calcium-binding domain; that stretch reads EINECLSQPCQNGGTCIDLVNTYKCSCPRGTQGVHCE. Residues 1219–1263 form the EGF-like 32; calcium-binding domain; that stretch reads DIDDCSPSVDPLTGEPRCFNGGRCVDRVGGYGCVCPAGFVGERCE. 4 consecutive EGF-like domains span residues 1265 to 1303, 1305 to 1344, 1346 to 1382, and 1385 to 1423; these read DVNECLSDPCDPSGSYNCVQLINDFRCECRTGYTGKRCE, VFNGCKDTPCKNGGTCAVASNTKHGYICKCQPGYSGSSCE, DSQSCGSLRCRNGATCVSGHLSPRCLCAPGFSGHECQ, and MDSPCLVNPCYNGGTCQPISDAPFYRCSCPANFNGLLCH. Thr1399 carries O-linked (Fuc...) threonine; alternate glycosylation. O-linked (GalNAc...) threonine; alternate glycosylation occurs at Thr1399. LNR repeat units follow at residues 1447-1487, 1488-1525, and 1526-1566; these read CEIA…PWQN, CSAALQCWRYFNDGKCDEQCATAGCLYDGFDCQRLEGQ, and CNPL…VPQK. Asn1487 carries N-linked (GlcNAc...) asparagine glycosylation. 6 disulfide bridges follow: Cys1488–Cys1512, Cys1494–Cys1507, Cys1503–Cys1519, Cys1526–Cys1552, Cys1534–Cys1547, and Cys1543–Cys1559. The N-linked (GlcNAc...) asparagine glycan is linked to Asn1585. Residues 1727–1747 form a helical membrane-spanning segment; that stretch reads PMFLVLLALAVLALAAVGVVV. At 1748 to 2437 the chain is on the cytoplasmic side; the sequence is SRKRKREHGQ…QMNHIPEAFK (690 aa). The segment at 1770–1790 is disordered; it reads KKKRREPVGEDSVGLKPLKNS. ANK repeat units follow at residues 1867–1910, 1915–1944, 1948–1978, 1982–2011, 2015–2044, and 2048–2077; these read DGFT…NLHN, TGETALHLAARYARSDAAKRLLESCADANV, MGRTPLHAAVAADAQGVFQILIRNRATDLDA, DGTTPLILATRLAVEGMVEELINCHADPNA, SGKSALHWAAAVNNVDAAVVLLKNGANKDL, and KEETPLFLAAREGSYETAKVLLDHLANRDI. 2 disordered regions span residues 2127-2174 and 2356-2437; these read IKPS…GGIM and RMAP…EAFK. Residues 2356 to 2387 are compositionally biased toward polar residues; it reads RMAPPISSTQFLTPPSQHSYSNPMDNTPNHQQ. Residues 2396–2411 show a composition bias toward low complexity; sequence PSAGSPDQWSSSSPHS. A compositionally biased stretch (polar residues) spans 2412-2429; sequence NLSDWSEGISSPPTSMQM.

The protein belongs to the NOTCH family. Post-translationally, synthesized in the endoplasmic reticulum as an inactive form which is proteolytically cleaved by a furin-like convertase in the trans-Golgi network before it reaches the plasma membrane to yield an active, ligand-accessible form. Cleavage results in a C-terminal fragment N(TM) and a N-terminal fragment N(EC). Following ligand binding, it is cleaved by adam17 to yield a membrane-associated intermediate fragment called notch extracellular truncation (NEXT). Following endocytosis, this fragment is then cleaved by presenilin dependent gamma-secretase to release a Notch-derived peptide containing the intracellular domain (NICD) from the membrane. O-glycosylated on the EGF-like domains. Contains both O-linked fucose and O-linked glucose. O-linked glycosylation by galnt11 is involved in determination of left/right symmetry: glycosylation promotes activation of notch1, possibly by promoting cleavage by adam17, modulating the balance between motile and immotile (sensory) cilia at the left-right organiser (LRO).

The protein resides in the cell membrane. It localises to the nucleus. Functionally, functions as a receptor for membrane-bound ligands Jagged-1 (JAG1), Jagged-2 (JAG2) and Delta-1 (DLL1) to regulate cell-fate determination. Upon ligand activation through the released notch intracellular domain (NICD) it forms a transcriptional activator complex with RBPJ/RBPSUH and activates genes of the enhancer of split locus. Affects the implementation of differentiation, proliferation and apoptotic programs. Involved in angiogenesis; negatively regulates endothelial cell proliferation and migration and angiogenic sprouting. Involved in the maturation of both CD4(+) and CD8(+) cells in the thymus. Important for follicular differentiation and possibly cell fate selection within the follicle. During cerebellar development, functions as a receptor for neuronal DNER and is involved in the differentiation of Bergmann glia. Represses neuronal and myogenic differentiation. May play an essential role in postimplantation development, probably in some aspect of cell specification and/or differentiation. May be involved in mesoderm development, somite formation and neurogenesis. Involved in determination of left/right symmetry by modulating the balance between motile and immotile (sensory) cilia at the left-right organiser (LRO). In Danio rerio (Zebrafish), this protein is Neurogenic locus notch homolog protein 1 (notch1a).